Reading from the N-terminus, the 469-residue chain is C4b-binding protein (469 aa).

Positions 1 to 56 are cleaved as a signal peptide; sequence MCAKQQQTLLPTRAAHGRLHRNRDAVAWPFSTLCRVSGPTLFQMTFTAALWVAVFG. 6 Sushi domains span residues 57 to 117, 118 to 178, 179 to 242, 243 to 301, 302 to 357, and 358 to 415; these read KCGP…SCAK, KHCR…ECVI, VKCG…TCEK, IICS…TCEF, DCDL…QCKA, and LCQK…RCEQ. 12 disulfides stabilise this stretch: Cys-58–Cys-103, Cys-88–Cys-115, Cys-120–Cys-160, Cys-146–Cys-176, Cys-181–Cys-223, Cys-209–Cys-240, Cys-245–Cys-287, Cys-273–Cys-299, Cys-303–Cys-343, Cys-329–Cys-355, Cys-359–Cys-400, and Cys-386–Cys-413. The N-linked (GlcNAc...) asparagine glycan is linked to Asn-74. N-linked (GlcNAc...) asparagine glycans are attached at residues Asn-227, Asn-275, and Asn-292. N-linked (GlcNAc...) asparagine glycans are attached at residues Asn-366 and Asn-381. The N-linked (GlcNAc...) asparagine glycan is linked to Asn-428.

Homoheptamer; not covalently linked. Mouse lacks the beta chain of C4BP.

Its subcellular location is the secreted. Its function is as follows. Controls the classical pathway of complement activation. It binds as a cofactor to C3b/C4b inactivator (C3bINA), which then hydrolyzes the complement fragment C4b. It also accelerates the degradation of the C4bC2a complex (C3 convertase) by dissociating the complement fragment C2a. Alpha chain binds C4b. It also interacts with serum amyloid P component. The sequence is that of C4b-binding protein (C4bpa) from Mus musculus (Mouse).